A 250-amino-acid polypeptide reads, in one-letter code: Low affinity immunoglobulin gamma Fc region receptor III-A (250 aa).

The first 20 residues, 1–20, serve as a signal peptide directing secretion; sequence MWRLLSPTALLLLVSAGTRA. Residues 21 to 207 lie on the Extracellular side of the membrane; sequence ADLSKAMVVL…TSTFLPHWYQ (187 aa). 2 consecutive Ig-like C2-type domains span residues 32–105 and 120–189; these read PEWN…LEVH and EGDT…VNIT. Disulfide bonds link cysteine 47-cysteine 89 and cysteine 128-cysteine 172. Residues asparagine 63, asparagine 133, asparagine 180, and asparagine 187 are each glycosylated (N-linked (GlcNAc...) asparagine). A helical membrane pass occupies residues 208 to 228; the sequence is IAFFLVTALLFVVDTGLHVAV. At 229 to 250 the chain is on the cytoplasmic side; it reads QRDLQSSVKEWKDGKVTWSHGP.

As to quaternary structure, forms a heterooligomeric complex with ITAM-containing signaling subunits FCER1G. Interacts (via transmembrane domain) with signaling subunits; this interaction is a prerequisite for receptor complex expression on the cell surface and intracellular signal transduction. Binds the Fc region of antigen-complexed IgG.

The protein resides in the cell membrane. Receptor for the invariable Fc fragment of immunoglobulin gamma (IgG). Optimally activated upon binding of clustered antigen-IgG complexes displayed on cell surfaces, triggers lysis of antibody-coated cells, a process known as antibody-dependent cellular cytotoxicity (ADCC). Does not bind free monomeric IgG, thus avoiding inappropriate effector cell activation in the absence of antigenic trigger. Mediates IgG effector functions on natural killer (NK) cells. Binds antigen-IgG complexes generated upon infection and triggers NK cell-dependent cytokine production and degranulation to limit viral load and propagation. Fc-binding subunit that associates with FCER1G adapter to form functional signaling complexes. Following the engagement of antigen-IgG complexes, triggers phosphorylation of immunoreceptor tyrosine-based activation motif (ITAM)-containing adapter with subsequent activation of phosphatidylinositol 3-kinase signaling and sustained elevation of intracellular calcium that ultimately drive NK cell activation. Mediates enhanced ADCC in response to afucosylated IgGs. This Felis catus (Cat) protein is Low affinity immunoglobulin gamma Fc region receptor III-A.